The following is a 358-amino-acid chain: Dynein axonemal assembly factor 10 (358 aa).

WD repeat units follow at residues 64–106 (EKPK…TPVY), 116–155 (NCID…TPVA), 163–206 (EAKR…VRWE), 208–250 (NIKN…PTKG), 258–298 (AHKS…QRSR), and 320–358 (LSTQ…LNRL).

Interacts with PIH1D1; the interaction associates DNAAF10 with the R2TP complex. Interacts with several dynein axonemal assembly factors.

It is found in the dynein axonemal particle. Functionally, key assembly factor specifically required for the stability of axonemal dynein heavy chains in cytoplasm. The chain is Dynein axonemal assembly factor 10 (dnaaf10) from Xenopus laevis (African clawed frog).